A 212-amino-acid chain; its full sequence is Proteasome subunit beta 2 (212 aa).

The propeptide at 1–13 is removed in mature form; by autocatalysis; sequence MSVDEKVARALKG. Thr14 (nucleophile) is an active-site residue.

Belongs to the peptidase T1B family. The 20S proteasome core is composed of 14 alpha and 14 beta subunits that assemble into four stacked heptameric rings, resulting in a barrel-shaped structure. The two inner rings, each composed of seven catalytic beta subunits, are sandwiched by two outer rings, each composed of seven alpha subunits. The catalytic chamber with the active sites is on the inside of the barrel. Has a gated structure, the ends of the cylinder being occluded by the N-termini of the alpha-subunits. Is capped at one or both ends by the proteasome regulatory ATPase, PAN.

The protein localises to the cytoplasm. It carries out the reaction Cleavage of peptide bonds with very broad specificity.. With respect to regulation, the formation of the proteasomal ATPase PAN-20S proteasome complex, via the docking of the C-termini of PAN into the intersubunit pockets in the alpha-rings, triggers opening of the gate for substrate entry. Interconversion between the open-gate and close-gate conformations leads to a dynamic regulation of the 20S proteasome proteolysis activity. Component of the proteasome core, a large protease complex with broad specificity involved in protein degradation. This Ignicoccus hospitalis (strain KIN4/I / DSM 18386 / JCM 14125) protein is Proteasome subunit beta 2.